The chain runs to 104 residues: Protein RnfH (104 aa).

The protein belongs to the UPF0125 (RnfH) family.

The sequence is that of Protein RnfH from Pseudomonas fluorescens (strain Pf0-1).